We begin with the raw amino-acid sequence, 199 residues long: Mediator of RNA polymerase II transcription subunit 10 (199 aa).

The protein belongs to the Mediator complex subunit 10 family. In terms of assembly, component of the Mediator complex.

The protein resides in the nucleus. Component of the Mediator complex, a coactivator involved in the regulated transcription of nearly all RNA polymerase II-dependent genes. Mediator functions as a bridge to convey information from gene-specific regulatory proteins to the basal RNA polymerase II transcription machinery. Mediator is recruited to promoters by direct interactions with regulatory proteins and serves as a scaffold for the assembly of a functional preinitiation complex with RNA polymerase II and the general transcription factors. The chain is Mediator of RNA polymerase II transcription subunit 10 (NUT2) from Candida glabrata (strain ATCC 2001 / BCRC 20586 / JCM 3761 / NBRC 0622 / NRRL Y-65 / CBS 138) (Yeast).